The primary structure comprises 299 residues: Taste receptor type 2 member 5 (299 aa).

Position 1 (methionine 1) is a topological domain, extracellular. Residues 2–22 (LSAGLGLLMLVAVVEFLIGLI) form a helical membrane-spanning segment. The Cytoplasmic portion of the chain corresponds to 23-45 (GNGVLVVWSFREWIRKFSWSSYN). Residues 46 to 66 (LIILGLAGCRFVLQWLIILDL) traverse the membrane as a helical segment. The Extracellular segment spans residues 67-82 (SLFPLFQSSRWLRYLS). The chain crosses the membrane as a helical span at residues 83–103 (IFWVLVSQASLWFATFLSVFY). Topologically, residues 104-127 (CKKITTFDHPAYLWLKQRAYNLSL) are cytoplasmic. The helical transmembrane segment at 128-148 (WCLLGYFIINLLLTVQIGLMF) threads the bilayer. Topologically, residues 149–175 (YHPPQGNSSIRYPFESWQYLYAFRLNS) are extracellular. Asparagine 155 carries N-linked (GlcNAc...) asparagine glycosylation. A helical membrane pass occupies residues 176-196 (GSYLPLMVFLVSSGMLIVSLY). Over 197–223 (THHKKMKVHSAGRRDVRAKAHITALKS) the chain is Cytoplasmic. The chain crosses the membrane as a helical span at residues 224-244 (LGCFLLLHLVYIMASPFSIAS). Residues 245–253 (KTYPPDLTS) are Extracellular-facing. Residues 254–274 (VFIWETLMAAYPSLHSLILIM) traverse the membrane as a helical segment. Residues 275–299 (GIPRVKQTCQKILWKTVCARRCWGP) are Cytoplasmic-facing.

It belongs to the G-protein coupled receptor T2R family.

The protein resides in the membrane. Functionally, receptor that may play a role in the perception of bitterness and is gustducin-linked. May play a role in sensing the chemical composition of the gastrointestinal content. The activity of this receptor may stimulate alpha gustducin, mediate PLC-beta-2 activation and lead to the gating of TRPM5. The polypeptide is Taste receptor type 2 member 5 (TAS2R5) (Pan paniscus (Pygmy chimpanzee)).